Reading from the N-terminus, the 339-residue chain is Phenylalanine--tRNA ligase alpha subunit (339 aa).

A Mg(2+)-binding site is contributed by Glu-250.

The protein belongs to the class-II aminoacyl-tRNA synthetase family. Phe-tRNA synthetase alpha subunit type 1 subfamily. Tetramer of two alpha and two beta subunits. Mg(2+) serves as cofactor.

Its subcellular location is the cytoplasm. The catalysed reaction is tRNA(Phe) + L-phenylalanine + ATP = L-phenylalanyl-tRNA(Phe) + AMP + diphosphate + H(+). This is Phenylalanine--tRNA ligase alpha subunit from Bacteroides thetaiotaomicron (strain ATCC 29148 / DSM 2079 / JCM 5827 / CCUG 10774 / NCTC 10582 / VPI-5482 / E50).